A 100-amino-acid polypeptide reads, in one-letter code: Urease subunit gamma (100 aa).

Belongs to the urease gamma subunit family. As to quaternary structure, heterotrimer of UreA (gamma), UreB (beta) and UreC (alpha) subunits. Three heterotrimers associate to form the active enzyme.

The protein resides in the cytoplasm. The catalysed reaction is urea + 2 H2O + H(+) = hydrogencarbonate + 2 NH4(+). The protein operates within nitrogen metabolism; urea degradation; CO(2) and NH(3) from urea (urease route): step 1/1. This Alkalilimnicola ehrlichii (strain ATCC BAA-1101 / DSM 17681 / MLHE-1) protein is Urease subunit gamma.